The sequence spans 397 residues: Mesoderm posterior protein 2 (397 aa).

4 disordered regions span residues 28–92, 152–208, 222–295, and 351–376; these read WDST…REKL, QRGD…GRRP, SPSA…VPWT, and PNSE…SGLR. 2 stretches are compositionally biased toward low complexity: residues 32 to 48 and 58 to 71; these read SPAS…CDGA and SCSS…ATTP. The region spanning 81–135 is the bHLH domain; it reads GQRQSASEREKLRMRTLARALHELRRFLPPSLAPAGQSLTKIETLRLAIRYIGHL. Tandem repeats lie at residues 179 to 180, 181 to 182, 183 to 184, 185 to 186, 187 to 188, 189 to 190, 191 to 192, 193 to 194, 195 to 196, 197 to 198, 199 to 200, 201 to 202, and 203 to 204. The 13 X 2 AA tandem repeats of G-Q stretch occupies residues 179–204; the sequence is GQGQGQGQGQGQGQGQGQGQGQGQGQ. A compositionally biased stretch (gly residues) spans 180-206; it reads QGQGQGQGQGQGQGQGQGQGQGQGQGR. The segment covering 235–244 has biased composition (basic and acidic residues); that stretch reads RLGRGVHDTD. 2 stretches are compositionally biased toward polar residues: residues 258-270 and 365-375; these read PPYS…SDAS and SEASPPQSSGL.

Degraded by the proteasome.

It is found in the nucleus. In terms of biological role, transcription factor with important role in somitogenesis. Defines the rostrocaudal patterning of the somite by participating in distinct Notch pathways. Also regulates the FGF signaling pathway. Specifies the rostral half of the somites. Generates rostro-caudal polarity of somites by down-regulating in the presumptive rostral domain DLL1, a Notch ligand. Participates in the segment border formation by activating in the anterior presomitic mesoderm LFNG, a negative regulator of DLL1-Notch signaling. Acts as a strong suppressor of Notch activity. Together with MESP1 is involved in the epithelialization of somitic mesoderm and in the development of cardiac mesoderm. The polypeptide is Mesoderm posterior protein 2 (MESP2) (Homo sapiens (Human)).